The primary structure comprises 125 residues: Small ribosomal subunit protein mS41 (125 aa).

A mitochondrion-targeting transit peptide spans 1–10 (MLSIFGCVRA). The tract at residues 103 to 125 (SFFGGERNRKATVAKWRAEQRNK) is disordered.

It belongs to the mitochondrion-specific ribosomal protein mS41 family.

Its subcellular location is the mitochondrion. Its function is as follows. Involved in telomere length regulation. This Candida glabrata (strain ATCC 2001 / BCRC 20586 / JCM 3761 / NBRC 0622 / NRRL Y-65 / CBS 138) (Yeast) protein is Small ribosomal subunit protein mS41 (FYV4).